A 1151-amino-acid polypeptide reads, in one-letter code: Zinc finger protein ZFPM2 (1151 aa).

The segment covering 1–13 (MSRRKQSKPRQIK) has biased composition (basic residues). A disordered region spans residues 1-102 (MSRRKQSKPR…ETDDWDGPGE (102 aa)). Composition is skewed to acidic residues over residues 18–33 (DAIE…EETD) and 70–82 (EGIQ…DGDT). The CCHC FOG-type 1 zinc finger occupies 244 to 277 (IVNKDIFPCKSCGIWYRSERNLQAHLMYYCSGRQ). Zn(2+)-binding residues include Cys252, Cys255, His268, and Cys273. The C2H2-type 1 zinc-finger motif lies at 296–320 (SLCPFPQCTKSFSNARALEMHLNSH). Lys324 is covalently cross-linked (Glycyl lysine isopeptide (Lys-Gly) (interchain with G-Cter in SUMO1)). 2 C2H2-type zinc fingers span residues 335–357 (LKCT…LFSH) and 363–385 (FRCN…QELH). Residues 389-487 (GKLPRESDME…RLASSPVQPN (99 aa)) are disordered. Polar residues-rich tracts occupy residues 401 to 410 (PSATEDSLQP) and 419 to 431 (ELPQ…QTKD). Lys444 is covalently cross-linked (Glycyl lysine isopeptide (Lys-Gly) (interchain with G-Cter in SUMO2)). Over residues 447-485 (LFLTNQRPEIQPTTNKQSFSYTKIKSEPSSPRLASSPVQ) the composition is skewed to polar residues. Lys471 is covalently cross-linked (Glycyl lysine isopeptide (Lys-Gly) (interchain with G-Cter in SUMO1)). Ser532 is modified (phosphoserine). The CCHC FOG-type 2 zinc finger occupies 542 to 575 (PLMPKGATCFECNITFNNLDNYLVHKKHYCSSRW). Zn(2+) is bound by residues Cys550, Cys553, His566, and Cys571. At Ser581 the chain carries Phosphoserine. Residues 636-683 (GPNGKGHDKDFSTQTKKLSTSSNNDDKINGKPVDVKNPSVPLVDGESD) form a disordered region. Over residues 647-658 (STQTKKLSTSSN) the composition is skewed to polar residues. The CCHC FOG-type 3 zinc-finger motif lies at 681 to 714 (ESDPNKTTCEACNITFSRHETYMVHKQYYCATRH). Residues Cys689, Cys692, His705, and Cys710 each coordinate Zn(2+). A Nuclear localization signal motif is present at residues 736-740 (RKRRK). The tract at residues 829–835 (PIDLSKK) is interaction with CTBP2. The segment at 848–881 (KRLLDYHECTVCKISFNKVENYLAHKQNFCPVTA) adopts a CCHC FOG-type 4 zinc-finger fold. Positions 856, 859, 872, and 877 each coordinate Zn(2+). Ser904 is subject to Phosphoserine. Glycyl lysine isopeptide (Lys-Gly) (interchain with G-Cter in SUMO1) cross-links involve residues Lys915 and Lys955. Residue Ser1014 is modified to Phosphoserine. The interval 1051–1095 (DERPAANPQQENISQNPQHEDDHKSPSWISENPLAANENVSPGIP) is disordered. Residues 1057-1067 (NPQQENISQNP) show a composition bias toward polar residues. A CCHC FOG-type 5 zinc finger spans residues 1113–1146 (QAPTSGKYCRLCDIQFNNLSNFITHKKFYCSSHA). Residues Cys1121, Cys1124, His1137, and Cys1142 each contribute to the Zn(2+) site.

This sequence belongs to the FOG (Friend of GATA) family. Interacts with the N-terminal zinc-finger of GATA4, GATA5 and probably GATA6. Interacts with retinoid nuclear receptor RXRA when ligand bound. Interacts with corepressor CTBP2; this interaction is however not essential for corepressor activity. Able to bind GATA1 in vitro. Interacts with NR2F2 and NR2F6. Interacts with ATOH8; mediates indirect interaction with GATA4. In terms of processing, sumoylation reduces transcriptional repression activity. In terms of tissue distribution, widely expressed at low level.

It localises to the nucleus. Transcription regulator that plays a central role in heart morphogenesis and development of coronary vessels from epicardium, by regulating genes that are essential during cardiogenesis. Essential cofactor that acts via the formation of a heterodimer with transcription factors of the GATA family GATA4, GATA5 and GATA6. Such heterodimer can both activate or repress transcriptional activity, depending on the cell and promoter context. Also required in gonadal differentiation, possibly be regulating expression of SRY. Probably acts a corepressor of NR2F2. The protein is Zinc finger protein ZFPM2 (ZFPM2) of Homo sapiens (Human).